We begin with the raw amino-acid sequence, 440 residues long: Tubby-like F-box protein 13 (440 aa).

The 56-residue stretch at 51–106 (SCWASLPPELLRDIIERLEESEATWPSRKHVVACAGVCRTWREMCKEIVKNPELCG) folds into the F-box domain.

It belongs to the TUB family. As to expression, ubiquitous.

The polypeptide is Tubby-like F-box protein 13 (TULP13) (Oryza sativa subsp. japonica (Rice)).